The primary structure comprises 450 residues: UPF0236 protein in vanSb 3'region (450 aa).

This sequence belongs to the UPF0236 family.

The sequence is that of UPF0236 protein in vanSb 3'region from Streptococcus gallolyticus (Streptococcus bovis biotype I).